The primary structure comprises 1771 residues: Atrochrysone carboxylic acid synthase (1771 aa).

The interval His38–His269 is N-terminal acylcarrier protein transacylase domain (SAT). A Ketosynthase family 3 (KS3) domain is found at Gln402–Glu836. Active-site for beta-ketoacyl synthase activity residues include Cys575, His711, and His754. The malonyl-CoA:ACP transacylase (MAT) domain stretch occupies residues Phe937–Glu1257. Residues Thr1322–Pro1641 form a product template (PT) domain region. The tract at residues Gln1326 to Glu1461 is N-terminal hotdog fold. One can recognise a PKS/mFAS DH domain in the interval Gln1326 to Asn1636. The Proton acceptor; for dehydratase activity role is filled by His1358. The interval Ile1488 to Asn1636 is C-terminal hotdog fold. Asp1547 (proton donor; for dehydratase activity) is an active-site residue. Positions Ala1668–Thr1681 are enriched in low complexity. The segment at Ala1668 to Ser1695 is disordered. In terms of domain architecture, Carrier spans Val1693–Tyr1770. Ser1730 is modified (O-(pantetheine 4'-phosphoryl)serine).

The enzyme catalyses holo-[ACP] + 8 malonyl-CoA + 8 H(+) = atrochrysone carboxyl-[ACP] + 8 CO2 + 8 CoA + 2 H2O. It participates in secondary metabolite biosynthesis. Non-reducing polyketide synthase; part of the gene cluster that mediates the biosynthesis of geodin, an intermediate in the biosynthesis of other natural products. The pathway begins with the synthesis of atrochrysone thioester by the polyketide synthase (PKS) gedC. The atrochrysone carboxyl ACP thioesterase gedB then breaks the thioester bond and releases the atrochrysone carboxylic acid from gedC. The atrochrysone carboxylic acid is then converted to atrochrysone which is further transformed into emodinanthrone. The next step is performed by the emodinanthrone oxygenase gedH that catalyzes the oxidation of emodinanthrone to emodin. Emodin O-methyltransferase encoded probably by gedA then catalyzes methylation of the 8-hydroxy group of emodin to form questin. Ring cleavage of questin by questin oxidase gedK leads to desmethylsulochrin via several intermediates including questin epoxide. Another methylation step probably catalyzed by methyltransferase gedG leads to the formation of sulochrin which is further converted to dihydrogeodin by the sulochrin halogenase gedL. Finally, the dihydrogeodin oxidase gedJ catalyzes the stereospecific phenol oxidative coupling reaction converting dihydrogeodin to geodin. The sequence is that of Atrochrysone carboxylic acid synthase from Aspergillus terreus (strain NIH 2624 / FGSC A1156).